Consider the following 462-residue polypeptide: Dipeptidyl peptidase 1 (462 aa).

An N-terminal signal peptide occupies residues 1–24; that stretch reads MGPWTHSLRAALLLVLLGVCTVSS. 2 N-linked (GlcNAc...) asparagine glycosylation sites follow: Asn29 and Asn53. Intrachain disulfides connect Cys30/Cys118 and Cys54/Cys136. Positions 135–229 are excised as a propeptide; sequence ACFVGKKMAN…TDEIQQQILS (95 aa). N-linked (GlcNAc...) asparagine glycosylation occurs at Asn144. 3 disulfides stabilise this stretch: Cys254–Cys297, Cys290–Cys330, and Cys320–Cys336. Cys257 is an active-site residue. N-linked (GlcNAc...) asparagine glycosylation occurs at Asn275. Residues Phe301 and Tyr303 each contribute to the chloride site. Chloride is bound at residue Tyr346. Residues His404 and Asn426 contribute to the active site.

It belongs to the peptidase C1 family. Tetramer of heterotrimers consisting of exclusion domain, heavy- and light chains. The cofactor is chloride. Broadly distributed, but higher levels found in liver, spleen, intestine, lung and kidney.

It is found in the lysosome. It catalyses the reaction Release of an N-terminal dipeptide, Xaa-Yaa-|-Zaa-, except when Xaa is Arg or Lys, or Yaa or Zaa is Pro.. Thiol protease. Has dipeptidylpeptidase activity. Active against a broad range of dipeptide substrates composed of both polar and hydrophobic amino acids. Proline cannot occupy the P1 position and arginine cannot occupy the P2 position of the substrate. Can act as both an exopeptidase and endopeptidase. Activates serine proteases such as elastase, cathepsin G and granzymes A and B. The polypeptide is Dipeptidyl peptidase 1 (Ctsc) (Rattus norvegicus (Rat)).